Here is a 502-residue protein sequence, read N- to C-terminus: UDP-N-acetylglucosamine diphosphorylase 2 (502 aa).

A Substrate binding motif is present at residues 130-133; that stretch reads LSGG. A substrate-binding site is contributed by Asn-250. The Substrate binding motif lies at 332–333; the sequence is EY. Position 429 (Lys-429) interacts with substrate.

This sequence belongs to the UDPGP type 1 family. As to quaternary structure, monomer. Mg(2+) serves as cofactor. The cofactor is Mn(2+). As to expression, expressed in root tips, stipules, lateral root primordia, immature anthers and at the branching points of the flowering shoots.

It is found in the cytoplasm. The enzyme catalyses N-acetyl-alpha-D-glucosamine 1-phosphate + UTP + H(+) = UDP-N-acetyl-alpha-D-glucosamine + diphosphate. It carries out the reaction N-acetyl-alpha-D-galactosamine 1-phosphate + UTP + H(+) = UDP-N-acetyl-alpha-D-galactosamine + diphosphate. It catalyses the reaction alpha-D-glucose 1-phosphate + UTP + H(+) = UDP-alpha-D-glucose + diphosphate. The protein operates within nucleotide-sugar biosynthesis; UDP-N-acetyl-alpha-D-glucosamine biosynthesis; UDP-N-acetyl-alpha-D-glucosamine from N-acetyl-alpha-D-glucosamine 1-phosphate: step 1/1. Uridylyltransferase involved in the biosynthesis of UDP-glucosamine, an essential precursor for glycoprotein and glycolipid synthesis. Can use UDP-glucosamine, the 4-epimer UDP-galactosamine and UDP-glucose as substrates. Acts redundantly with GLCNAC1PUT1. Required for gametogenesis and embryo development. The protein is UDP-N-acetylglucosamine diphosphorylase 2 (GLCNAC1PUT2) of Arabidopsis thaliana (Mouse-ear cress).